Reading from the N-terminus, the 95-residue chain is NADH-quinone oxidoreductase subunit 11 (95 aa).

3 helical membrane-spanning segments follow: residues 1-21 (MSYL…VLTR), 25-45 (ILVF…LVGF), and 59-79 (MVIA…VAIF).

This sequence belongs to the complex I subunit 4L family. In terms of assembly, NDH-1 is composed of 15 different subunits, Nqo1 to Nqo15. The complex has a L-shaped structure, with the hydrophobic arm (subunits Nqo7, Nqo8 and Nqo10 to Nqo14) embedded in the membrane and the hydrophilic peripheral arm (subunits Nqo1 to Nqo6, Nqo9 and Nqo15) protruding into the bacterial cytoplasm. The hydrophilic domain contains all the redox centers.

The protein localises to the cell inner membrane. The enzyme catalyses a quinone + NADH + 5 H(+)(in) = a quinol + NAD(+) + 4 H(+)(out). Functionally, NDH-1 shuttles electrons from NADH, via FMN and iron-sulfur (Fe-S) centers, to quinones in the respiratory chain. The immediate electron acceptor for the enzyme in this species is menaquinone. Couples the redox reaction to proton translocation (for every two electrons transferred, four hydrogen ions are translocated across the cytoplasmic membrane), and thus conserves the redox energy in a proton gradient required for the synthesis of ATP. The polypeptide is NADH-quinone oxidoreductase subunit 11 (nqo11) (Thermus thermophilus (strain ATCC 27634 / DSM 579 / HB8)).